The following is a 247-amino-acid chain: Protein SODIUM POTASSIUM ROOT DEFECTIVE 3 (247 aa).

The disordered stretch occupies residues 130–166; it reads GSTGQDTVATEESEASAPKRGSSGPVEEKKKSSGSGS. The 69-residue stretch at 167–235 folds into the HMA domain; sequence DQVVVLRVSL…KVKNAQFWTP (69 aa). Residues C180 and C183 each coordinate a metal cation.

It localises to the cytoplasm. Heavy metal-associated protein involved in salt tolerance. The chain is Protein SODIUM POTASSIUM ROOT DEFECTIVE 3 from Arabidopsis thaliana (Mouse-ear cress).